The chain runs to 485 residues: MPQDPNTTLQMSSSKPSLSDLSVSADPVLGKADNQVRDSLALPSIEGGEEGVMRPLAWLFGLCAIQQASGATLLRNDVSTVEPLPPTQDPWYRAPPGFEKKQPGDVLRIRQAPGNLTTVVSNSSAAFHILFRTTNARSEPAWAVTTLFLPKKLYRAPSRNAALLSFQLADNSANPDSAPSLGLYWRLAQDNPMLGLRSDTSFISNLLSEGWLVNIPDQSGPEAAFGASRQAGHATIDAIRAIQHLCSLTGATGINAAIWGYSGGTFATGAAAELMPTYAPNINIVGAVLGGMVTDVSGGFDSLNRSPIAATIIATLLGVTAQFPEERAYLESRLVPETRDEFMSVLDINVFDALVHFAGRDIYAFFIDGAADIEAPILQNLFEAQSRIGFGDIPPMPMFIYKAIADEVVPIGPTDVTVQRWCDGGADITYERNTVGGHIAEIENGKPRAIQWLWSIFDESYSAQSPECRIRDVTVEVPVQVVGRV.

The tract at residues 1 to 23 is disordered; the sequence is MPQDPNTTLQMSSSKPSLSDLSV. Low complexity predominate over residues 9 to 23; it reads LQMSSSKPSLSDLSV. Active-site charge relay system residues include Ser-262, Asp-406, and His-438.

The protein belongs to the AB hydrolase superfamily. Lipase family.

Its pathway is mycotoxin biosynthesis. Probable trichothecene esterase; part of the satratoxin SC1 cluster involved in the biosynthesis of satratoxins, trichothecene mycotoxins that are associated with human food poisonings. Satratoxins are suggested to be made by products of multiple gene clusters (SC1, SC2 and SC3) that encode 21 proteins in all, including polyketide synthases, acetyltransferases, and other enzymes expected to modify the trichothecene skeleton. SC1 encodes 10 proteins, SAT1 to SAT10. The largest are SAT8, which encodes a putative polyketide synthase (PKS) with a conventional non-reducing architecture, and SAT10, a putative protein containing four ankyrin repeats and thus may be involved in protein scaffolding. The putative short-chain reductase SAT3 may assist the PKS in some capacity. SAT6 contains a secretory lipase domain and acts probably as a trichothecene esterase. SAT5 encodes a putative acetyltransferase, and so, with SAT6, may affect endogenous protection from toxicity. The probable transcription factor SAT9 may regulate the expression of the SC1 cluster. SC2 encodes proteins SAT11 to SAT16, the largest of which encodes the putative reducing PKS SAT13. SAT11 is a cytochrome P450 monooxygenase, while SAT14 and SAT16 are probable acetyltransferases. The SC2 cluster may be regulated by the transcription factor SAT15. SC3 is a small cluster that encodes 5 proteins, SAT17 to SAT21. SAT21 is a putative MFS-type transporter which may have a role in exporting secondary metabolites. The four other proteins putatively encoded in SC3 include the taurine hydroxylase-like protein SAT17, the O-methyltransferase SAT18, the acetyltransferase SAT19, and the Cys6-type zinc finger SAT20, the latter being probably involved in regulation of SC3 expression. This Stachybotrys chartarum (strain CBS 109288 / IBT 7711) (Toxic black mold) protein is Probable trichothecene esterase SAT6.